We begin with the raw amino-acid sequence, 194 residues long: Ribosomal RNA large subunit methyltransferase E (194 aa).

S-adenosyl-L-methionine contacts are provided by G48, W50, D66, N82, and D110. Catalysis depends on K150, which acts as the Proton acceptor.

It belongs to the class I-like SAM-binding methyltransferase superfamily. RNA methyltransferase RlmE family.

The protein localises to the cytoplasm. The catalysed reaction is uridine(2552) in 23S rRNA + S-adenosyl-L-methionine = 2'-O-methyluridine(2552) in 23S rRNA + S-adenosyl-L-homocysteine + H(+). Its function is as follows. Specifically methylates the uridine in position 2552 of 23S rRNA at the 2'-O position of the ribose in the fully assembled 50S ribosomal subunit. This chain is Ribosomal RNA large subunit methyltransferase E, found in Picrophilus torridus (strain ATCC 700027 / DSM 9790 / JCM 10055 / NBRC 100828 / KAW 2/3).